Consider the following 234-residue polypeptide: MKNLVILSGAGISAESGIKTFRDAGGLWEGHDIMEVASPYGWKKNPQKVLDFYNQRRRQLFEVYPNKAHKALAELEKHYQVNIITQNVDDLHERAGSSRILHLHGELLSVRSEKDPNLVYRWEKDLNLGDLAQDKAQLRPDIVWFGEEVPLLKEAVSLVKQVHLLIIIGTSLQVYPAASLYTHANKDALIYYIDPKAKNARLPQNVQCINENAVHAMQDLMPKLIEMASQEMLK.

Residues 1–234 enclose the Deacetylase sirtuin-type domain; it reads MKNLVILSGA…IEMASQEMLK (234 aa). NAD(+) is bound at residue 9-28; the sequence is GAGISAESGIKTFRDAGGLW. Tyrosine 53 and arginine 56 together coordinate substrate. Residue 86–89 participates in NAD(+) binding; sequence QNVD. Histidine 104 (proton acceptor) is an active-site residue. Residues 169–171 and methionine 217 contribute to the NAD(+) site; that span reads GTS.

This sequence belongs to the sirtuin family. Class III subfamily.

The protein resides in the cytoplasm. The catalysed reaction is N(6)-acetyl-L-lysyl-[protein] + NAD(+) + H2O = 2''-O-acetyl-ADP-D-ribose + nicotinamide + L-lysyl-[protein]. It carries out the reaction N(6)-succinyl-L-lysyl-[protein] + NAD(+) + H2O = 2''-O-succinyl-ADP-D-ribose + nicotinamide + L-lysyl-[protein]. In terms of biological role, NAD-dependent lysine deacetylase and desuccinylase that specifically removes acetyl and succinyl groups on target proteins. Modulates the activities of several proteins which are inactive in their acylated form. The polypeptide is NAD-dependent protein deacylase (Helicobacter pylori (strain J99 / ATCC 700824) (Campylobacter pylori J99)).